A 167-amino-acid chain; its full sequence is Ribosome maturation factor RimM (167 aa).

One can recognise a PRC barrel domain in the interval 92 to 166; it reads DGVYYYRELL…EVRVELMEGL (75 aa).

The protein belongs to the RimM family. Binds ribosomal protein uS19.

It localises to the cytoplasm. Its function is as follows. An accessory protein needed during the final step in the assembly of 30S ribosomal subunit, possibly for assembly of the head region. Essential for efficient processing of 16S rRNA. May be needed both before and after RbfA during the maturation of 16S rRNA. It has affinity for free ribosomal 30S subunits but not for 70S ribosomes. The sequence is that of Ribosome maturation factor RimM from Lactobacillus delbrueckii subsp. bulgaricus (strain ATCC 11842 / DSM 20081 / BCRC 10696 / JCM 1002 / NBRC 13953 / NCIMB 11778 / NCTC 12712 / WDCM 00102 / Lb 14).